The sequence spans 451 residues: Ribosomal protein uS12 methylthiotransferase RimO (451 aa).

Positions 17-127 (PTIGFVSLGC…VLAQVHEHLP (111 aa)) constitute an MTTase N-terminal domain. Cys-26, Cys-62, Cys-91, Cys-160, Cys-164, and Cys-167 together coordinate [4Fe-4S] cluster. In terms of domain architecture, Radical SAM core spans 146–383 (LTPRHYAYLK…MQLQQRISTE (238 aa)). Residues 386-451 (KQKVGQTLPV…DEYDLWGTRV (66 aa)) enclose the TRAM domain.

Belongs to the methylthiotransferase family. RimO subfamily. The cofactor is [4Fe-4S] cluster.

It localises to the cytoplasm. The catalysed reaction is L-aspartate(89)-[ribosomal protein uS12]-hydrogen + (sulfur carrier)-SH + AH2 + 2 S-adenosyl-L-methionine = 3-methylsulfanyl-L-aspartate(89)-[ribosomal protein uS12]-hydrogen + (sulfur carrier)-H + 5'-deoxyadenosine + L-methionine + A + S-adenosyl-L-homocysteine + 2 H(+). In terms of biological role, catalyzes the methylthiolation of an aspartic acid residue of ribosomal protein uS12. The sequence is that of Ribosomal protein uS12 methylthiotransferase RimO from Cellvibrio japonicus (strain Ueda107) (Pseudomonas fluorescens subsp. cellulosa).